The chain runs to 1714 residues: Intersectin-1 (1714 aa).

The region spanning 21–109 (ERAKHDQQFL…PVMKQQPVAI (89 aa)) is the EH 1 domain. Residues 53–88 (LPQPVLAQIWALADMNNDGRMDQVEFSIAMKLIKLK) form the EF-hand 1 domain. 5 residues coordinate Ca(2+): aspartate 66, asparagine 68, aspartate 70, arginine 72, and glutamate 77. Serine 203 carries the post-translational modification Phosphoserine. The EH 2 domain maps to 221–310 (SRLKYRQLFN…PEYIPPSFRR (90 aa)). An EF-hand 2 domain is found at 254-289 (LPQAQLASIWNLSDIDQDGKLTAEEFILAMHLIDVA). Ca(2+) contacts are provided by aspartate 267, aspartate 269, aspartate 271, lysine 273, and glutamate 278. Over residues 310 to 325 (RVRSGSGMSVISSSSV) the composition is skewed to low complexity. Disordered stretches follow at residues 310–356 (RVRS…KREN) and 614–706 (SKQQ…QSRL). Residues serine 318, serine 334, and serine 335 each carry the phosphoserine modification. Residues 326 to 702 (DQRLPEEPSS…ERAKPEMQDK (377 aa)) are KLERQ. Basic and acidic residues-rich tracts occupy residues 340 to 356 (QPEKKLPVTFEDKKREN) and 622 to 706 (RSLE…QSRL). Residues 354–658 (RENFERGSVE…QRRVQERDKQ (305 aa)) adopt a coiled-coil conformation. At serine 685 the chain carries Phosphoserine. Positions 738–799 (VKVVYYRALY…PANYAEKIPE (62 aa)) constitute an SH3 1 domain. The disordered stretch occupies residues 827-863 (APLPVTSSEPSTTPNNWADFSSTWPSSSNEKPETDNW). The span at 831-855 (VTSSEPSTTPNNWADFSSTWPSSSN) shows a compositional bias: polar residues. A Phosphothreonine modification is found at threonine 890. Phosphoserine occurs at positions 894, 895, and 897. Residues 906-964 (VEGLQAQALYPWRAKKDNHLNFNKSDVITVLEQQDMWWFGEVQGQKGWFPKSYVKLISG) form the SH3 2 domain. Serine 971 carries the phosphoserine modification. Residue threonine 977 is modified to Phosphothreonine. A phosphoserine mark is found at serine 979 and serine 988. 2 SH3 domains span residues 995–1053 (IPGE…LKDS) and 1067–1131 (KKPE…LLSP). The tract at residues 1067-1131 (KKPEIAQVIA…PANYVKLLSP (65 aa)) is required for interaction with FCHSD2. A Bipartite nuclear localization signal; in isoform 2 motif is present at residues 1097–1120 (RKKNPGGWWEGELQARGKKRQIGW). Residue serine 1130 is modified to Phosphoserine. Threonine 1137 is modified (phosphothreonine). In terms of domain architecture, SH3 5 spans 1148 to 1207 (PAVCQVIGMYDYTAQNDDELAFSKGQIINVLNKEDPDWWKGEVSGQVGLFPSNYVKLTTD). The 187-residue stretch at 1230–1416 (KRQGYIHELI…EELCSQVNEG (187 aa)) folds into the DH domain. Positions 1455-1564 (KFLHSGKLYK…WVQKIKAASE (110 aa)) constitute a PH domain. Positions 1572-1688 (KKREKAYLVR…KKDQGSKGPV (117 aa)) constitute a C2 domain. Serine 1638 carries the post-translational modification Phosphoserine. 3 residues coordinate Ca(2+): aspartate 1660, serine 1663, and aspartate 1666.

As to quaternary structure, interacts (via DH domain) with CDC42. Interacts (via SH3 domain 1) with WASL. Interacts with dynamin, SNAP25 and SNAP23. Interacts with clathrin-associated proteins and other components of the endocytic machinery, such as SPIN90, EPS15, EPN1, EPN2, STON2, FCHO1, FCHO2 and DAB2. Interacts (via SH3 domains) with REPS1 and SGIP1. Interacts with ARHGAP31. Interacts with ADAM15. Interacts with PRRT2. Interacts (via SH3 domain 4) with FCHSD2 (via SH3 domain 2). Interacts (via SH3 domain 1) with DENND2B. Interacts (via SH3 domains) with CBL. Isoform 2: Interacts with CBL and DNM1. Isoform 2: Interacts with LMNA. Isoform 2: Interacts with importin subunit KPNA1; this is likely to mediate its import into the nucleus. Interacts with DNM2. Ca(2+) serves as cofactor. In terms of tissue distribution, detected in brain, adrenal gland and heart. Detected in neurons at the calyx of Held (at protein level). Isoform 1: Primarily detected in brain neurons. Isoform 2: Primarily detected in glia (at protein level). Widely expressed. Expressed at high levels in brain, heart and skeletal muscle.

It is found in the endomembrane system. It localises to the synapse. Its subcellular location is the synaptosome. The protein localises to the cell projection. The protein resides in the lamellipodium. It is found in the cell membrane. It localises to the membrane. Its subcellular location is the clathrin-coated pit. The protein localises to the recycling endosome. The protein resides in the endosome. It is found in the cytoplasmic vesicle. It localises to the cytoplasm. Its subcellular location is the nucleus envelope. Its function is as follows. Adapter protein that provides a link between the endocytic membrane traffic and the actin assembly machinery. Acts as a guanine nucleotide exchange factor (GEF) for CDC42, and thereby stimulates actin nucleation mediated by WASL and the ARP2/3 complex. Plays a role in the assembly and maturation of clathrin-coated vesicles. Recruits FCHSD2 to clathrin-coated pits. Involved in endocytosis of activated EGFR, and probably also other growth factor receptors. Involved in endocytosis of integrin beta-1 (ITGB1) and transferrin receptor (TFR); internalization of ITGB1 as DAB2-dependent cargo but not TFR may involve association with DAB2. Promotes ubiquitination and subsequent degradation of EGFR, and thereby contributes to the down-regulation of EGFR-dependent signaling pathways. In chromaffin cells, required for normal exocytosis of catecholamines. Required for rapid replenishment of release-ready synaptic vesicles at presynaptic active zones. Inhibits ARHGAP31 activity toward RAC1. In terms of biological role, plays a role in synaptic vesicle endocytosis in brain neurons. This Mus musculus (Mouse) protein is Intersectin-1.